The primary structure comprises 514 residues: Light-independent protochlorophyllide reductase subunit B (514 aa).

Aspartate 36 lines the [4Fe-4S] cluster pocket. The active-site Proton donor is aspartate 300. 435-436 (GM) provides a ligand contact to substrate.

Belongs to the ChlB/BchB/BchZ family. In terms of assembly, protochlorophyllide reductase is composed of three subunits; ChlL, ChlN and ChlB. Forms a heterotetramer of two ChlB and two ChlN subunits. The cofactor is [4Fe-4S] cluster.

Its subcellular location is the plastid. It localises to the chloroplast. The enzyme catalyses chlorophyllide a + oxidized 2[4Fe-4S]-[ferredoxin] + 2 ADP + 2 phosphate = protochlorophyllide a + reduced 2[4Fe-4S]-[ferredoxin] + 2 ATP + 2 H2O. It participates in porphyrin-containing compound metabolism; chlorophyll biosynthesis (light-independent). Its function is as follows. Component of the dark-operative protochlorophyllide reductase (DPOR) that uses Mg-ATP and reduced ferredoxin to reduce ring D of protochlorophyllide (Pchlide) to form chlorophyllide a (Chlide). This reaction is light-independent. The NB-protein (ChlN-ChlB) is the catalytic component of the complex. This chain is Light-independent protochlorophyllide reductase subunit B, found in Pleurastrum terricola (Filamentous green alga).